Reading from the N-terminus, the 161-residue chain is Protein PLASTID TRANSCRIPTIONALLY ACTIVE 7 (161 aa).

The transit peptide at 1 to 32 (MASFTCSSPSSILPIIDTRSGNLRCTFQSQVS) directs the protein to the chloroplast.

In terms of assembly, component of the transcriptionally active chromosome (TAC) complexes. Interacts with FLN1, PTAC10, PTAC12/HMR/PAP5 and PTAC14. Binds to SL1/MTERF3. Mostly expressed in leaves, flowers and seedlings, and, to a lower extent, in roots and stems.

Its subcellular location is the plastid. It is found in the chloroplast. In terms of biological role, essential for chloroplast development, especially for thylakoid formation. Involved in plastid gene expression, probably by maintaining plastid-encoded RNA polymerase (PEP) activity. This Arabidopsis thaliana (Mouse-ear cress) protein is Protein PLASTID TRANSCRIPTIONALLY ACTIVE 7.